The primary structure comprises 394 residues: MKKIVLAYSGGLDTSVILKWLQENYNCEVVVFTADIGQEDDMSVIQKKAAALNVKEIFIEDLKEEFVRDFVFPMFRANTIYEGYYLLGTSIARPLIAKRQIEIAHLTGADAVAHGATGKGNDQVRFEFGYYCCDPNIKVIAPWRQWELTSRHSLIEYARKNNINVPLDKVNEPPYSIDANLLHISYEGKSLEDPYVEPDYTMLSRSLTPELASSIPEYIEITFEQGDPIAINDIPLSPANLLHQLNKIGGKHGIGIVDIVENRYIGIKSRGIYETPGGTILLHAHRAIESITLDRESAHLKDEIMPKYAKLIYNGYWWTTERKMLQSLIDNHKKKFNGTVRIKLYKGSVVVVGRKSNNSLYSYNLASFDSESQGYDHKDAEGFIKVNSLRLKKS.

ATP-binding positions include 7–15 (AYSGGLDTS) and A34. Y85 and S90 together coordinate L-citrulline. Residue G115 participates in ATP binding. 3 residues coordinate L-aspartate: T117, N121, and D122. N121 serves as a coordination point for L-citrulline. L-citrulline is bound by residues R125, S176, S185, E261, and Y273.

This sequence belongs to the argininosuccinate synthase family. Type 1 subfamily. Homotetramer.

The protein localises to the cytoplasm. The catalysed reaction is L-citrulline + L-aspartate + ATP = 2-(N(omega)-L-arginino)succinate + AMP + diphosphate + H(+). Its pathway is amino-acid biosynthesis; L-arginine biosynthesis; L-arginine from L-ornithine and carbamoyl phosphate: step 2/3. In Ehrlichia ruminantium (strain Gardel), this protein is Argininosuccinate synthase.